The primary structure comprises 292 residues: Ribosomal RNA small subunit methyltransferase A (292 aa).

Asn-28, Leu-30, Gly-55, Glu-76, Asp-101, and Asn-126 together coordinate S-adenosyl-L-methionine.

The protein belongs to the class I-like SAM-binding methyltransferase superfamily. rRNA adenine N(6)-methyltransferase family. RsmA subfamily.

It is found in the cytoplasm. The enzyme catalyses adenosine(1518)/adenosine(1519) in 16S rRNA + 4 S-adenosyl-L-methionine = N(6)-dimethyladenosine(1518)/N(6)-dimethyladenosine(1519) in 16S rRNA + 4 S-adenosyl-L-homocysteine + 4 H(+). Functionally, specifically dimethylates two adjacent adenosines (A1518 and A1519) in the loop of a conserved hairpin near the 3'-end of 16S rRNA in the 30S particle. May play a critical role in biogenesis of 30S subunits. This chain is Ribosomal RNA small subunit methyltransferase A, found in Bacillus cereus (strain G9842).